The sequence spans 514 residues: Bifunctional purine biosynthesis protein PurH (514 aa).

The MGS-like domain occupies 1–145; that stretch reads MIKRALISVS…KNYQDVAVIV (145 aa).

It belongs to the PurH family.

It catalyses the reaction (6R)-10-formyltetrahydrofolate + 5-amino-1-(5-phospho-beta-D-ribosyl)imidazole-4-carboxamide = 5-formamido-1-(5-phospho-D-ribosyl)imidazole-4-carboxamide + (6S)-5,6,7,8-tetrahydrofolate. The catalysed reaction is IMP + H2O = 5-formamido-1-(5-phospho-D-ribosyl)imidazole-4-carboxamide. It functions in the pathway purine metabolism; IMP biosynthesis via de novo pathway; 5-formamido-1-(5-phospho-D-ribosyl)imidazole-4-carboxamide from 5-amino-1-(5-phospho-D-ribosyl)imidazole-4-carboxamide (10-formyl THF route): step 1/1. It participates in purine metabolism; IMP biosynthesis via de novo pathway; IMP from 5-formamido-1-(5-phospho-D-ribosyl)imidazole-4-carboxamide: step 1/1. This Ruminiclostridium cellulolyticum (strain ATCC 35319 / DSM 5812 / JCM 6584 / H10) (Clostridium cellulolyticum) protein is Bifunctional purine biosynthesis protein PurH.